The chain runs to 95 residues: Large ribosomal subunit protein bL25 (95 aa).

The protein belongs to the bacterial ribosomal protein bL25 family. Part of the 50S ribosomal subunit; part of the 5S rRNA/L5/L18/L25 subcomplex. Contacts the 5S rRNA. Binds to the 5S rRNA independently of L5 and L18.

In terms of biological role, this is one of the proteins that binds to the 5S RNA in the ribosome where it forms part of the central protuberance. The sequence is that of Large ribosomal subunit protein bL25 from Glaesserella parasuis serovar 5 (strain SH0165) (Haemophilus parasuis).